Consider the following 339-residue polypeptide: MAGKGTQTPPYWYDGSPVPWAMRLLAPLYAGVTALRRRAYRRGWRKHYTLPVPVIVVGNITAGGTGKTPLTIALVERLRAAGWKPGVASRGYGREDADKPLWVQADTPTAKGGDEPVLIAWKTGVPVRVDRDRVAAGKALIEAGCDVIVCDDGLQHYRLARDIEIEVVDAQRRYGNGRMIPAGPLREPVSRASECDFRVVNLGQADEESAAQACGFGQWPMALHIDSAQPLAGGRARPLAYFKGQRVHAVAGIAHPQRFFDMLRARGIGVVPHAFADHQAYQPQDLSFGSQLPVLMTEKDAVKCRAFGNDWYYAVPLRAELPAAFWVALTDRLDKLRPN.

ATP is bound at residue 61–68 (TAGGTGKT).

Belongs to the LpxK family.

It carries out the reaction a lipid A disaccharide + ATP = a lipid IVA + ADP + H(+). Its pathway is glycolipid biosynthesis; lipid IV(A) biosynthesis; lipid IV(A) from (3R)-3-hydroxytetradecanoyl-[acyl-carrier-protein] and UDP-N-acetyl-alpha-D-glucosamine: step 6/6. Its function is as follows. Transfers the gamma-phosphate of ATP to the 4'-position of a tetraacyldisaccharide 1-phosphate intermediate (termed DS-1-P) to form tetraacyldisaccharide 1,4'-bis-phosphate (lipid IVA). The chain is Tetraacyldisaccharide 4'-kinase from Stenotrophomonas maltophilia (strain R551-3).